We begin with the raw amino-acid sequence, 185 residues long: MYIIVGLGNPGKKYSGTRHNVGFDVIDLLAHRLGITVNKLKHKALYGEARIGGEKVILAKPQTFMNLSGESIREMMQFYKIDPENLIVIYDDIDVKVGSLRIRQSGSAGTHNGMKSTIYQLQTDAFPRIRIGVGRPEFGDLSNYVLGSFTKDEIPLMKESLERATLTVESIVIDGIDKAMNRYNG.

Position 14 (Tyr14) interacts with tRNA. The Proton acceptor role is filled by His19. The tRNA site is built by Phe64, Asn66, and Asn112.

The protein belongs to the PTH family. Monomer.

The protein localises to the cytoplasm. It carries out the reaction an N-acyl-L-alpha-aminoacyl-tRNA + H2O = an N-acyl-L-amino acid + a tRNA + H(+). Functionally, hydrolyzes ribosome-free peptidyl-tRNAs (with 1 or more amino acids incorporated), which drop off the ribosome during protein synthesis, or as a result of ribosome stalling. Catalyzes the release of premature peptidyl moieties from peptidyl-tRNA molecules trapped in stalled 50S ribosomal subunits, and thus maintains levels of free tRNAs and 50S ribosomes. This is Peptidyl-tRNA hydrolase from Alkaliphilus metalliredigens (strain QYMF).